The chain runs to 266 residues: uncharacterized protein (266 aa).

The next 7 helical transmembrane spans lie at 25-45 (LPSL…GYLL), 64-84 (IGAA…AELI), 111-131 (IVTI…GHLV), 158-178 (VLIS…LSFG), 186-206 (ILGI…HVVA), 209-229 (FVIP…IGNI), and 230-250 (IPAF…IYFI).

The protein belongs to the FNT transporter (TC 1.A.16) family.

Its subcellular location is the cell membrane. This is an uncharacterized protein from Bacillus subtilis (strain 168).